Here is a 570-residue protein sequence, read N- to C-terminus: MSFSMTRELYTAKYGPTVGDAVRLGDTDLFIEIEKDYTSYGDEVIFGGGKVIRDGMGQDPLISRAEGAMDLVITNAVILDYSGIYKADIGIKDGKIAAIGKSGNPRIMKNVDIIIGASTEIIAGEGLIVTAGGIDTHIHFISPQQVDVALTSGVTTLIGGGTGPAEGTKATTCTPGEWNIHRMLESVEGLPINVGLLGKGSTSSDVALTEQIRAGVIGLKIHEDFGAMRSVIDHSLKIADEYDVQVAIHTDTLNEFGFVEDTIDSINGRVIHTFHTEGAGGGHAPDIIKMGAFSNVLPASTNPTKPYTINTIDEHMDMLMVCHHLRRNVPEDVAFADSRIRKETIAAEDILHDMGIFSIMSSDSQAMGRIGEVITRTWQTADKMKKQRGKLQGDSGVGDNNRAKRYISKYTINPAIAHGINTYVGSVEVGKYADLVLWQPQFFGAKPNMIIKCGMVANSIMGDANASIPTPQPITYRPMYASYGLALQRSSITFVSKIAFELGVHKKLGLEKTVLPVFGIRNLTKQDMKHNCETPEITVDPQTYDVRVNGELITCEPAAELPLAQRYFLF.

Residues His137, His139, and Lys220 each contribute to the Ni(2+) site. Residue Lys220 is modified to N6-carboxylysine. His222 serves as a coordination point for substrate. Positions 249 and 275 each coordinate Ni(2+). His323 (proton donor) is an active-site residue. Asp363 lines the Ni(2+) pocket.

This sequence belongs to the metallo-dependent hydrolases superfamily. Urease alpha subunit family. In terms of assembly, heterotrimer of UreA (gamma), UreB (beta) and UreC (alpha) subunits. Three heterotrimers associate to form the active enzyme. The cofactor is Ni cation. In terms of processing, carboxylation allows a single lysine to coordinate two nickel ions.

Its subcellular location is the cytoplasm. It catalyses the reaction urea + 2 H2O + H(+) = hydrogencarbonate + 2 NH4(+). Its pathway is nitrogen metabolism; urea degradation; CO(2) and NH(3) from urea (urease route): step 1/1. This is Urease subunit alpha from Lachnoclostridium phytofermentans (strain ATCC 700394 / DSM 18823 / ISDg) (Clostridium phytofermentans).